The sequence spans 313 residues: 2-oxoglutarate-dependent dioxygenase eupC (313 aa).

Residues 187 to 284 (PSIPMRFLHY…LNAKALDGSG (98 aa)) form the Fe2OG dioxygenase domain. 3 residues coordinate Fe cation: His-212, Asp-214, and His-263. Lys-274 serves as a coordination point for 2-oxoglutarate.

It belongs to the iron/ascorbate-dependent oxidoreductase family. Fe(2+) serves as cofactor.

It functions in the pathway secondary metabolite biosynthesis; terpenoid biosynthesis. Functionally, 2-oxoglutarate-dependent dioxygenase; part of the gene cluster that mediates the biosynthesis of eupenifeldin, a bistropolone meroterpenoid that acts as an antitumor agent. The first step of eupenifeldin biosynthesis is the biosynthesis of 3-methylorcinaldehyde performed by the non-reducing polyketide synthase eupA. Oxidative dearomatization of 3-methylorcinaldehyde likely catalyzed by the FAD-dependent monooxygenase eupB is followed by oxidative ring expansion by the 2-oxoglutarate-dependent dioxygenase eupC to provide the first tropolone metabolite, tropolone stipitaldehyde. In parallel, generation of sesquiterpene alpha-humulene from farnesylpyrophosphate (FPP) is catalyzed by the terpene cyclase eupE. The cytochrome P450 monooxygenase eupD then hydroxylates humulene to humulenol. The putative Diels-Alderase eupF probably catalyzes the formation of the tropolone-humulene skeleton by linking humulenol and the polyketide moiety. The short-chain dehydrogenase/reductase eupG and the flavin-dependent monooxygenase eupH are also essential for eupenifeldin biosynthesis and are likely the additional decorating enzymes of the tropolone-humulene skeleton to produce final eupenifeldin or derivatives. The polypeptide is 2-oxoglutarate-dependent dioxygenase eupC (Phoma sp).